We begin with the raw amino-acid sequence, 442 residues long: Sexual development regulator VELC (442 aa).

2 disordered regions span residues 1-192 (MPVH…ASLA) and 396-442 (KKGN…IRRS). Residues 45–54 (IAPPPPPTPP) show a composition bias toward pro residues. Residues 79-97 (PGPRRPSNPSSPQHPQQPG) are compositionally biased toward low complexity. One can recognise a Velvet domain in the interval 213–396 (FSTSEYHLHV…KEQGCLISIK (184 aa)). The span at 401–411 (KGGGGGGGGPS) shows a compositional bias: gly residues. Basic residues predominate over residues 433–442 (AGKRKRIRRS).

It belongs to the velvet family. VelC subfamily.

It is found in the nucleus. Functionally, velvet-domain-containing protein that acts as a positive regulator of sexual development. Plays an important role in pathogenicity through regulating positively appressorium-mediated penetration and invasive growth. The sequence is that of Sexual development regulator VELC from Pyricularia oryzae (strain 70-15 / ATCC MYA-4617 / FGSC 8958) (Rice blast fungus).